The primary structure comprises 750 residues: Photosystem I P700 chlorophyll a apoprotein A1 (750 aa).

Transmembrane regions (helical) follow at residues 70 to 93 (VFSA…FHGA), 156 to 179 (LYCT…FHYH), 195 to 219 (LNHH…HVSL), 291 to 309 (IAHH…GHMY), 346 to 369 (WHAQ…HHMY), 385 to 411 (LSLF…IFMV), 433 to 455 (AIIS…LYIH), and 531 to 549 (FLVH…LILL). [4Fe-4S] cluster is bound by residues Cys573 and Cys582. The next 2 membrane-spanning stretches (helical) occupy residues 589 to 610 (HVFL…HFSW) and 664 to 686 (LSAY…MFLF). His675 is a binding site for chlorophyll a'. Met683 and Tyr691 together coordinate chlorophyll a. Trp692 lines the phylloquinone pocket. Residues 724-744 (AVGVTHYLLGGIATTWAFFLA) form a helical membrane-spanning segment.

It belongs to the PsaA/PsaB family. In terms of assembly, the PsaA/B heterodimer binds the P700 chlorophyll special pair and subsequent electron acceptors. PSI consists of a core antenna complex that captures photons, and an electron transfer chain that converts photonic excitation into a charge separation. The eukaryotic PSI reaction center is composed of at least 11 subunits. P700 is a chlorophyll a/chlorophyll a' dimer, A0 is one or more chlorophyll a, A1 is one or both phylloquinones and FX is a shared 4Fe-4S iron-sulfur center. is required as a cofactor.

The protein localises to the plastid. It localises to the chloroplast thylakoid membrane. It carries out the reaction reduced [plastocyanin] + hnu + oxidized [2Fe-2S]-[ferredoxin] = oxidized [plastocyanin] + reduced [2Fe-2S]-[ferredoxin]. In terms of biological role, psaA and PsaB bind P700, the primary electron donor of photosystem I (PSI), as well as the electron acceptors A0, A1 and FX. PSI is a plastocyanin-ferredoxin oxidoreductase, converting photonic excitation into a charge separation, which transfers an electron from the donor P700 chlorophyll pair to the spectroscopically characterized acceptors A0, A1, FX, FA and FB in turn. Oxidized P700 is reduced on the lumenal side of the thylakoid membrane by plastocyanin. The protein is Photosystem I P700 chlorophyll a apoprotein A1 of Pelargonium hortorum (Common geranium).